Here is a 489-residue protein sequence, read N- to C-terminus: Rhamnulokinase (489 aa).

13–17 is an ATP binding site; it reads ASSGR. A disulfide bond links cysteine 68 and cysteine 222. Substrate-binding positions include glycine 83 and 236–238; that span reads HDT. The Proton acceptor role is filled by aspartate 237. Threonine 259 contributes to the ATP binding site. Asparagine 296 contributes to the substrate binding site. Glutamine 304 contributes to the ATP binding site. An intrachain disulfide couples cysteine 353 to cysteine 370. ATP is bound at residue glycine 402. Residues cysteine 413 and cysteine 417 are joined by a disulfide bond.

It belongs to the rhamnulokinase family. Monomer. Mg(2+) is required as a cofactor.

It catalyses the reaction L-rhamnulose + ATP = L-rhamnulose 1-phosphate + ADP + H(+). It participates in carbohydrate degradation; L-rhamnose degradation; glycerone phosphate from L-rhamnose: step 2/3. Its function is as follows. Involved in the catabolism of L-rhamnose (6-deoxy-L-mannose). Catalyzes the transfer of the gamma-phosphate group from ATP to the 1-hydroxyl group of L-rhamnulose to yield L-rhamnulose 1-phosphate. The sequence is that of Rhamnulokinase from Escherichia coli O157:H7.